A 541-amino-acid chain; its full sequence is Glutamine-dependent NAD(+) synthetase (541 aa).

The region spanning 4-243 (FKIALAQFSP…EELYYSEFDI (240 aa)) is the CN hydrolase domain. E44 acts as the Proton acceptor; for glutaminase activity in catalysis. Catalysis depends on K111, which acts as the For glutaminase activity. Y117 contacts L-glutamine. C147 serves as the catalytic Nucleophile; for glutaminase activity. Residues S173 and K179 each coordinate L-glutamine. Residue 286-293 (GLSGGIDS) coordinates ATP. N369 serves as a coordination point for deamido-NAD(+). Position 393 (T393) interacts with ATP. Positions 398 and 510 each coordinate deamido-NAD(+).

This sequence in the C-terminal section; belongs to the NAD synthetase family.

The enzyme catalyses deamido-NAD(+) + L-glutamine + ATP + H2O = L-glutamate + AMP + diphosphate + NAD(+) + H(+). It participates in cofactor biosynthesis; NAD(+) biosynthesis; NAD(+) from deamido-NAD(+) (L-Gln route): step 1/1. In terms of biological role, catalyzes the ATP-dependent amidation of deamido-NAD to form NAD. Uses L-glutamine as a nitrogen source. In vitro, can also use ammonia as donor with comparable specific activity, but cannot use nicotinate mononucleotide (NaMN) as substrate. This Acinetobacter baylyi (strain ATCC 33305 / BD413 / ADP1) protein is Glutamine-dependent NAD(+) synthetase.